A 1452-amino-acid polypeptide reads, in one-letter code: MNESHEAGKNSSTNVEEREEEVLRLARQFTEQSSYSTAGQTPFAAEAGSALDPNGERFNARAWCKAMLQMHIGDKEAHPLRTLGVAFSNLNVHGFGSDTDYQKSVGNVWLKTLSLARIAFGQKQRKVDILQNLEGLVEAGEMLVVLGPPGSGCSTFLKTIAGETYGFHVDKNSNINFQGIAKQMAHEFRGEAIYTAEVDVHFPKLTVGDTLYFAARARTPRHIPGGVNATQYAGHMRDVIMAMFGISHTKNTIVGNDFIRGVSGGERKRVSIAEACLSNAPLQCWDNSTRGLDSANAIEFCKTLRMQADINGTTACVSLYQAPQAAYDYFDKVLVLYEGREIYFGPTSMAKHYFLQMGFVCPDRQTDADFLTSMTSHLERVVQPGYEDRVPRTPDEFAARWKASPQRAQLMQHIKSYNAKFALDGEYLDKFKQSRRAQQAKAQRVSSPYTLSYVQQVKLCLWRGYQRLKADPSVTISSLFGNTIISLVIASIFYNLKADTSTFFQRGALLFFAVLMNALGCGLEMLTLYAQRGIIEKHSRYALYHPSAEAFSSMIMDLPYKILNAITSNIVLYFMTNLRRAPGAFFFFVFTSFILTLTMSMFFRSMASLSRSLVQVLPFSAVLLLGLSMYTGFAIPTGYMLGWARWIAYINPISYGFESLMINEFHNRDFPCMDYVPSGPGYTDVGLNNRVCSTVRSVPGQAFVNGNAYIESAYSYTASHKWRNIGVIFAYMFLLGAVYLVATDFITEKKPKGEILVFPRGHKALKKGKSDEDLEGGGGRSATVEKIGSDGLAMIERQTAIFQWKDVCFDIKIGKENCRILDHVDGWVKPGILTALMGVSGAGKTTLLDVLATRTTMGIISGEMLVDGQPRDESFQRKTGYAQQQDLHLSTATVREALEFSALLRQSAHVPRQEKIDYVTEVIKLLDMTEYADAVIGVPGEGLNVEQRKRLTIGVELAARPQLLLFLDEPTSGLDSQTSWAILDLLDKLKKNGQAILCTIHQPSAMLFQRFDRLLFLQAGGRTVYFGEIGQNSQILIDYFVRNGAPPCPPDANPAEWMLDVIGAAPGSHTSINWFETWRRSPEYARVQEHLAELKHERRHQTNLFRTTSGQKREDKDSYREFAAPFWAQLYQVQVRVFQQIWRSPTYINSKTALCVLSALFVGFSLFHTPNTIQGLQNQMFGIFMLLTLFGQLIQQIMPHFVAQRALYEVRDRPAKTYSWKAFLIANIVVELPWNSLMSVLMFLCWYYPIGLYRNAEPTDAVHLRGTQMWLMIWTFLLFSSTFAHFMIAAFDAAENAGNLGNLLFLLCLLFCGVLATPDQLPRFWIFMYRVSPFTYLVSGMLSVGISNTNVTCADNEYLRFDPVNGTCGEYMGSYMSNLGGYLADEMATANCSFCPIKETNVFLGRVSSSYSDIWRNFGLMWVFIVFNIFAACSLYWWVRVPRDKKPVAKAE.

The tract at residues methionine 1–glutamate 20 is disordered. N-linked (GlcNAc...) asparagine glycans are attached at residues asparagine 2, asparagine 10, asparagine 228, asparagine 287, and asparagine 311. Positions leucine 110–aspartate 363 constitute an ABC transporter 1 domain. Helical transmembrane passes span valine 474–tyrosine 494, alanine 508–leucine 528, methionine 554–phenylalanine 574, glycine 583–phenylalanine 603, valine 616–proline 636, and isoleucine 725–phenylalanine 745. Positions phenylalanine 802 to glycine 1044 constitute an ABC transporter 2 domain. Glycine 838–threonine 845 is a binding site for ATP. The next 5 helical transmembrane spans lie at alanine 1153–isoleucine 1173, isoleucine 1183–alanine 1203, phenylalanine 1223–phenylalanine 1243, leucine 1271–phenylalanine 1291, and alanine 1297–threonine 1317. N-linked (GlcNAc...) asparagine glycosylation is found at asparagine 1350, asparagine 1365, and asparagine 1391. The helical transmembrane segment at phenylalanine 1418 to tryptophan 1438 threads the bilayer.

It belongs to the ABC transporter superfamily. ABCG family. PDR (TC 3.A.1.205) subfamily.

Its subcellular location is the membrane. In terms of biological role, ABC transporter that seems not to be involved in the efflux of toxic substances, at least not the classical compounds such as itraconazole, amphotericin B, voriconazole, posaconazole, ravuconazole, or echinocandins. The chain is ABC multidrug transporter A from Aspergillus fumigatus (Neosartorya fumigata).